Reading from the N-terminus, the 276-residue chain is Putative pyruvate, phosphate dikinase regulatory protein 1 (276 aa).

Position 150-157 (150-157 (GLPRTSKT)) interacts with ADP.

This sequence belongs to the pyruvate, phosphate/water dikinase regulatory protein family. PDRP subfamily.

It catalyses the reaction N(tele)-phospho-L-histidyl/L-threonyl-[pyruvate, phosphate dikinase] + ADP = N(tele)-phospho-L-histidyl/O-phospho-L-threonyl-[pyruvate, phosphate dikinase] + AMP + H(+). The enzyme catalyses N(tele)-phospho-L-histidyl/O-phospho-L-threonyl-[pyruvate, phosphate dikinase] + phosphate + H(+) = N(tele)-phospho-L-histidyl/L-threonyl-[pyruvate, phosphate dikinase] + diphosphate. In terms of biological role, bifunctional serine/threonine kinase and phosphorylase involved in the regulation of the pyruvate, phosphate dikinase (PPDK) by catalyzing its phosphorylation/dephosphorylation. This Syntrophomonas wolfei subsp. wolfei (strain DSM 2245B / Goettingen) protein is Putative pyruvate, phosphate dikinase regulatory protein 1.